Consider the following 473-residue polypeptide: MRKQRFNPYLPSWEYIPDAEPYVFNGRVYIYGSHDRFNGHAFCLNDYVCWSAPVDDLSEWRYEGVIYRKTDDPLNPDGRMCLYAPDVTLGPDGRYYLYYVLDKVPVVSVAVCDTPAGKYEFYGYVRYADGTRLGEREGDWPQFDPAVLTEGERTYLYTGFCPKGDKSRKGAMATVLGPDMLTVVEEPVIIVPSEPYSRGSGFEGHEFFEAPSIRKKGDTYYFIYSSVVMHELCYATSKHPTKGFKYGGVIVSNCDLHIDSYKPAEKPMYYGGNNHGSIVEINGEWYIFYHRHTNGTSFSRQGCMEKIKILEDGSIPQVEMTSCGSADEPLPGRGEYPAYIACNLFCGEESVYTDLTGAWMNNQFPKITQDGKDGDEEPGYIANMKDSATAGFKYFDCKGIKSVKIKVRGYCRGVFEVKTSWNGEVLGKIPVEFSNIWTEFSASIPIPDGIHALYFTYRGSGSASLKSFTLCTD.

Catalysis depends on D18, which acts as the Proton acceptor. The active-site Proton donor is the E209.

This sequence belongs to the glycosyl hydrolase 43 family. Homotetramer.

It carries out the reaction Hydrolysis of (1-&gt;4)-beta-D-xylans, to remove successive D-xylose residues from the non-reducing termini.. It catalyses the reaction Hydrolysis of terminal non-reducing alpha-L-arabinofuranoside residues in alpha-L-arabinosides.. The sequence is that of Xylosidase/arabinosidase (xylA) from Thermoclostridium stercorarium (Clostridium stercorarium).